A 231-amino-acid polypeptide reads, in one-letter code: Orotate phosphoribosyltransferase (231 aa).

Residues lysine 27, 79–80 (YK), arginine 106, lysine 107, lysine 110, histidine 112, and 133–141 (DDVMTAGTA) each bind 5-phospho-alpha-D-ribose 1-diphosphate. Threonine 137 and arginine 166 together coordinate orotate.

It belongs to the purine/pyrimidine phosphoribosyltransferase family. PyrE subfamily. Homodimer. It depends on Mg(2+) as a cofactor.

The enzyme catalyses orotidine 5'-phosphate + diphosphate = orotate + 5-phospho-alpha-D-ribose 1-diphosphate. The protein operates within pyrimidine metabolism; UMP biosynthesis via de novo pathway; UMP from orotate: step 1/2. Catalyzes the transfer of a ribosyl phosphate group from 5-phosphoribose 1-diphosphate to orotate, leading to the formation of orotidine monophosphate (OMP). The sequence is that of Orotate phosphoribosyltransferase from Bifidobacterium animalis subsp. lactis (strain AD011).